The primary structure comprises 204 residues: MTNFPKIGKTPPNFLTIGVYKKRLGKIRLSDYRGKKYVILFFYPANFTAISPTELMLLSDRISEFRKLSTQILAISVDSPFSHLQYLLCNREEGGLEDLNYPLVSDLTQTITRDYQVLTDEGLAFPGLFIIDKEGIIQYYTVNNLLCGRNINELLRILESIQYVKENPGYACPVNWNFGDQVFYSHPLKSKIYFKDLYSPKKSS.

In terms of domain architecture, Thioredoxin spans 5–163 (PKIGKTPPNF…LLRILESIQY (159 aa)).

The protein belongs to the peroxiredoxin family. AhpC/Prx1 subfamily.

Its subcellular location is the plastid. The protein resides in the chloroplast. The enzyme catalyses a hydroperoxide + [protein]-dithiol = [protein]-disulfide + an alcohol + H2O. The sequence is that of Putative peroxiredoxin ycf42 (ycf42) from Trieres chinensis (Marine centric diatom).